Reading from the N-terminus, the 514-residue chain is 3-octaprenyl-4-hydroxybenzoate carboxy-lyase (514 aa).

Asn-177 provides a ligand contact to Mn(2+). Prenylated FMN-binding positions include 180–182 (IYR), 194–196 (RWL), and 199–200 (RG). Glu-243 contributes to the Mn(2+) binding site. Asp-314 functions as the Proton donor in the catalytic mechanism.

It belongs to the UbiD family. Homohexamer. Prenylated FMN serves as cofactor. Mn(2+) is required as a cofactor.

Its subcellular location is the cell membrane. The enzyme catalyses a 4-hydroxy-3-(all-trans-polyprenyl)benzoate + H(+) = a 2-(all-trans-polyprenyl)phenol + CO2. It participates in cofactor biosynthesis; ubiquinone biosynthesis. Catalyzes the decarboxylation of 3-octaprenyl-4-hydroxy benzoate to 2-octaprenylphenol, an intermediate step in ubiquinone biosynthesis. The protein is 3-octaprenyl-4-hydroxybenzoate carboxy-lyase of Bordetella bronchiseptica (strain ATCC BAA-588 / NCTC 13252 / RB50) (Alcaligenes bronchisepticus).